A 198-amino-acid polypeptide reads, in one-letter code: dITP/XTP pyrophosphatase (198 aa).

8–13 (TKNKGK) is a substrate binding site. The active-site Proton acceptor is the Asp69. Asp69 contacts Mg(2+). Substrate is bound by residues Ser70, 152–155 (FGYD), Lys175, and 180–181 (HR).

It belongs to the HAM1 NTPase family. In terms of assembly, homodimer. Mg(2+) serves as cofactor.

It carries out the reaction XTP + H2O = XMP + diphosphate + H(+). It catalyses the reaction dITP + H2O = dIMP + diphosphate + H(+). The catalysed reaction is ITP + H2O = IMP + diphosphate + H(+). Its function is as follows. Pyrophosphatase that catalyzes the hydrolysis of nucleoside triphosphates to their monophosphate derivatives, with a high preference for the non-canonical purine nucleotides XTP (xanthosine triphosphate), dITP (deoxyinosine triphosphate) and ITP. Seems to function as a house-cleaning enzyme that removes non-canonical purine nucleotides from the nucleotide pool, thus preventing their incorporation into DNA/RNA and avoiding chromosomal lesions. The polypeptide is dITP/XTP pyrophosphatase (Shouchella clausii (strain KSM-K16) (Alkalihalobacillus clausii)).